The chain runs to 411 residues: Multidrug resistance protein MdtH (411 aa).

11 helical membrane passes run tyrosine 13 to isoleucine 33, alanine 45 to phenylalanine 65, leucine 73 to isoleucine 95, proline 99 to phenylalanine 116, leucine 139 to leucine 159, leucine 165 to leucine 185, tyrosine 213 to isoleucine 233, alanine 243 to isoleucine 263, isoleucine 288 to tyrosine 308, leucine 340 to glycine 360, and isoleucine 365 to tyrosine 385.

The protein belongs to the major facilitator superfamily. DHA1 family. MdtH (TC 2.A.1.2.21) subfamily.

It localises to the cell membrane. The sequence is that of Multidrug resistance protein MdtH from Baumannia cicadellinicola subsp. Homalodisca coagulata.